We begin with the raw amino-acid sequence, 590 residues long: Cytidine monophosphate-N-acetylneuraminic acid hydroxylase (590 aa).

The 99-residue stretch at 14–112 folds into the Rieske domain; it reads LSPVEVANLK…VEMDENNGLL (99 aa). Residues C54, H56, C75, and H78 each coordinate [2Fe-2S] cluster.

This sequence belongs to the CMP-Neu5Ac hydroxylase family. The cofactor is [2Fe-2S] cluster.

It is found in the cytoplasm. The enzyme catalyses CMP-N-acetyl-beta-neuraminate + 2 Fe(II)-[cytochrome b5] + O2 + 2 H(+) = CMP-N-glycoloyl-beta-neuraminate + 2 Fe(III)-[cytochrome b5] + H2O. Its pathway is amino-sugar metabolism; N-acetylneuraminate metabolism. Its function is as follows. Sialic acids are components of carbohydrate chains of glycoconjugates and are involved in cell-cell recognition and cell-pathogen interactions. Catalyzes the conversion of CMP-N-acetylneuraminic acid (CMP-Neu5Ac) into its hydroxylated derivative CMP-N-glycolylneuraminic acid (CMP-Neu5Gc), a sialic acid abundantly expressed at the surface of many cells. The protein is Cytidine monophosphate-N-acetylneuraminic acid hydroxylase (CMAH) of Macaca mulatta (Rhesus macaque).